Consider the following 177-residue polypeptide: Dual-action ribosomal maturation protein DarP (177 aa).

The protein belongs to the DarP family.

The protein resides in the cytoplasm. Its function is as follows. Member of a network of 50S ribosomal subunit biogenesis factors which assembles along the 30S-50S interface, preventing incorrect 23S rRNA structures from forming. Promotes peptidyl transferase center (PTC) maturation. The sequence is that of Dual-action ribosomal maturation protein DarP from Histophilus somni (strain 129Pt) (Haemophilus somnus).